Reading from the N-terminus, the 334-residue chain is Immune-associated nucleotide-binding protein 3 (334 aa).

An AIG1-type G domain is found at 11–219 (KAVKNIVLVG…FRGKMYLEIK (209 aa)). Residues 20–27 (GRTGNGKS) form a G1 region. GTP is bound by residues 20-28 (GRTGNGKSA) and S41. Positions 47 to 51 (GVTKT) are G2. Residues 69 to 72 (DTPG) form a G3 region. The tract at residues 139 to 142 (TGGD) is G4. A G5 region spans residues 178–180 (NNM). Position 179 (N179) interacts with GTP. Residues 272-306 (SAAHERMVSMLNENLENAHRENIDLRKAHDHEQKK) adopt a coiled-coil conformation.

The protein belongs to the TRAFAC class TrmE-Era-EngA-EngB-Septin-like GTPase superfamily. AIG1/Toc34/Toc159-like paraseptin GTPase family. IAN subfamily. In terms of tissue distribution, mostly expressed in pollen. Also detected in lateral roots and radicles.

The chain is Immune-associated nucleotide-binding protein 3 from Arabidopsis thaliana (Mouse-ear cress).